A 428-amino-acid polypeptide reads, in one-letter code: Enolase (428 aa).

A (2R)-2-phosphoglycerate-binding site is contributed by Gln-164. The active-site Proton donor is Glu-206. Mg(2+)-binding residues include Asp-243, Glu-286, and Asp-313. (2R)-2-phosphoglycerate is bound by residues Lys-338, Arg-367, Ser-368, and Lys-389. Lys-338 functions as the Proton acceptor in the catalytic mechanism.

It belongs to the enolase family. Requires Mg(2+) as cofactor.

The protein localises to the cytoplasm. The protein resides in the secreted. Its subcellular location is the cell surface. The catalysed reaction is (2R)-2-phosphoglycerate = phosphoenolpyruvate + H2O. It participates in carbohydrate degradation; glycolysis; pyruvate from D-glyceraldehyde 3-phosphate: step 4/5. Functionally, catalyzes the reversible conversion of 2-phosphoglycerate (2-PG) into phosphoenolpyruvate (PEP). It is essential for the degradation of carbohydrates via glycolysis. The chain is Enolase from Dehalococcoides mccartyi (strain ATCC BAA-2100 / JCM 16839 / KCTC 5957 / BAV1).